A 303-amino-acid polypeptide reads, in one-letter code: Glycine betaine/carnitine/choline-binding protein OpuCC (303 aa).

The signal sequence occupies residues 1 to 20; the sequence is MTKIKWLGAFALVFVMLLGG. The N-palmitoyl cysteine moiety is linked to residue Cys21. A lipid anchor (S-diacylglycerol cysteine) is attached at Cys21.

Belongs to the OsmX family. As to quaternary structure, the complex is composed of two ATP-binding proteins (OpuCA), two transmembrane proteins (OpuCB and OpuCD) and a solute-binding protein (OpuCC).

It is found in the cell membrane. Functionally, member of a high affinity multicomponent binding-protein-dependent transport system for glycine betaine, carnitine, and choline. This is Glycine betaine/carnitine/choline-binding protein OpuCC (opuCC) from Bacillus subtilis (strain 168).